We begin with the raw amino-acid sequence, 962 residues long: Rho GTPase-activating protein syd-1 (962 aa).

Disordered stretches follow at residues 231 to 367, 397 to 419, and 437 to 471; these read GKKS…MRSD, PRTLRQPNDSNKSNSLPRRRIMT, and CGEESDGAISAPEYSSPPFSRLTQQQQFRLSNGSP. 4 stretches are compositionally biased toward polar residues: residues 243–261, 323–345, 401–412, and 453–471; these read NATTTSTMRAAHASTSSPR, SFNSAPGVSSSAPMYTLPRSSTA, RQPNDSNKSNSL, and PPFSRLTQQQQFRLSNGSP. A C2 domain is found at 572–696; the sequence is RAAGPGINVD…NDDRVFALNL (125 aa). Positions 729 to 923 constitute a Rho-GAP domain; the sequence is VPLGRLVQRE…LDMNQASSSL (195 aa). The segment covering 934–947 has biased composition (polar residues); it reads VNSESGSDSPATSG. Residues 934–962 are disordered; sequence VNSESGSDSPATSGQKGGGGVSYVSESQC.

Its subcellular location is the synapse. In terms of biological role, probable GTPase activator for the Rho-type GTPases by converting them to an inactive GDP-bound state. Regulates the localization and assembly of presynaptic components during presynaptic development and is required for specifying the identity of axons during initial polarity acquisition. In these roles it is thought to act cell autonomously downstream of syg-1 and syg-2 and upstream of syd-2, possibly as a positive regulator of the latter. Required for the control of movement, egg-laying and the correct localization of elks-1. The protein is Rho GTPase-activating protein syd-1 of Caenorhabditis briggsae.